Here is a 467-residue protein sequence, read N- to C-terminus: Probable circularly permuted 1,3-beta-glucanase TOS1 (467 aa).

The first 21 residues, 1–21, serve as a signal peptide directing secretion; the sequence is MKFSSTTLLAGLSSLTATVSA. Residues 158–172 show a composition bias toward low complexity; sequence PAVSSAAADDNANSG. Disordered regions lie at residues 158 to 187 and 200 to 223; these read PAVS…GYGS and SDIS…TASV. Gly residues predominate over residues 173 to 185; it reads SGSGSSAGSGSGY. Positions 203 to 222 are enriched in low complexity; that stretch reads STKSAPTSTSAQPSSSETAS. The ExDxxE motif motif lies at 374–379; the sequence is ELDLFE. The interval 391–413 is disordered; it reads HLHDGQGSSQNSNNGGGGSQDYF.

Belongs to the PGA52 family. Cleaved by KEX2 in vitro.

The protein localises to the secreted. The enzyme catalyses Hydrolysis of (1-&gt;3)-beta-D-glucosidic linkages in (1-&gt;3)-beta-D-glucans.. Its function is as follows. Probable circularly permuted 1,3-beta-glucanase involved in cell wall modification through beta-1,3-glucan network alterations such as increased branching or remodeling. Plays a role in engulfment by host macrophages. In Candida albicans (strain SC5314 / ATCC MYA-2876) (Yeast), this protein is Probable circularly permuted 1,3-beta-glucanase TOS1.